Reading from the N-terminus, the 492-residue chain is DEAD-box ATP-dependent RNA helicase RhpA (492 aa).

The Q motif motif lies at 20-48; sequence PSFNDLGLKESVLKSVYEAGFTSPSPIQE. Positions 51-220 constitute a Helicase ATP-binding domain; it reads IPAVLQGRDV…DKILENPIKI (170 aa). Residue 64–71 coordinates ATP; that stretch reads AQTGTGKT. The DEAD box motif lies at 168-171; the sequence is DESD. The 163-residue stretch at 231–393 folds into the Helicase C-terminal domain; sequence DITQRFYVIN…EIPTINENQI (163 aa). A disordered region spans residues 445 to 492; the sequence is AIQNPKEKTPKPSHKKTPQHERARSFKKGQHRDRHPKTNHHSKKPKRR. The span at 469 to 492 shows a compositional bias: basic residues; it reads SFKKGQHRDRHPKTNHHSKKPKRR.

Belongs to the DEAD box helicase family. As to quaternary structure, homodimer. Interacts with RNase J (rnj), might be a member of a minimal RNA degradosome complex.

It localises to the cytoplasm. It carries out the reaction ATP + H2O = ADP + phosphate + H(+). Functionally, DEAD-box RNA helicase probably involved in RNA degradation. Unwinds dsRNA in both 5'- and 3'-directions. Background RNA-dependent ATPase activity is stimulated about 5-fold by RNaseJ (rnj). Stimulates the dsRNase activity of RNase J. This chain is DEAD-box ATP-dependent RNA helicase RhpA (rhpA), found in Helicobacter pylori (strain B128).